Reading from the N-terminus, the 442-residue chain is GTPase Obg (442 aa).

Residues 1-158 enclose the Obg domain; sequence MFYDQARIFV…HWLELELKLL (158 aa). The OBG-type G domain occupies 159-329; it reads ADVGLVGFPN…LIYHVHKGLE (171 aa). Residues 165–172, 190–194, 212–215, 282–285, and 310–312 each bind GTP; these read GFPNVGKS, FTTLE, DIPG, NKMD, and SAA. 2 residues coordinate Mg(2+): Ser172 and Thr192. One can recognise an OCT domain in the interval 349-427; the sequence is FTGKTEERFK…IGDLDFDFIE (79 aa).

The protein belongs to the TRAFAC class OBG-HflX-like GTPase superfamily. OBG GTPase family. As to quaternary structure, monomer. The cofactor is Mg(2+).

It localises to the cytoplasm. An essential GTPase which binds GTP, GDP and possibly (p)ppGpp with moderate affinity, with high nucleotide exchange rates and a fairly low GTP hydrolysis rate. Plays a role in control of the cell cycle, stress response, ribosome biogenesis and in those bacteria that undergo differentiation, in morphogenesis control. The protein is GTPase Obg of Heliobacterium modesticaldum (strain ATCC 51547 / Ice1).